Reading from the N-terminus, the 83-residue chain is Small ribosomal subunit protein bS16 (83 aa).

It belongs to the bacterial ribosomal protein bS16 family.

The polypeptide is Small ribosomal subunit protein bS16 (Shewanella denitrificans (strain OS217 / ATCC BAA-1090 / DSM 15013)).